The chain runs to 284 residues: ATP synthase gamma chain (284 aa).

It belongs to the ATPase gamma chain family. In terms of assembly, F-type ATPases have 2 components, CF(1) - the catalytic core - and CF(0) - the membrane proton channel. CF(1) has five subunits: alpha(3), beta(3), gamma(1), delta(1), epsilon(1). CF(0) has three main subunits: a, b and c.

The protein resides in the cell membrane. Functionally, produces ATP from ADP in the presence of a proton gradient across the membrane. The gamma chain is believed to be important in regulating ATPase activity and the flow of protons through the CF(0) complex. The polypeptide is ATP synthase gamma chain (Bacillus licheniformis (strain ATCC 14580 / DSM 13 / JCM 2505 / CCUG 7422 / NBRC 12200 / NCIMB 9375 / NCTC 10341 / NRRL NRS-1264 / Gibson 46)).